The following is a 701-amino-acid chain: MNSLFASTARGLEELLKTELEGLGATDCQVVQGGVHFQGDTRLLYQSLMWSRLASRIMLPLGECRVYSDLDLYLGVQAIPWTEMFNPGATFAVHFSGLNDEIRNSQYGALKVKDAIVDSFTRKNLPRPNVDRESPDLRINVWLNKETAHISLDLSGEGLHLRGYRDGTGMAPIKENLAAAIVMRSGWVPGTPLLDPMCGSGTLLIEAAMLATDRAPGLHRGHWGFGGWAQHDDAIWKEVKAEAQTRARQGLAAYESRFYGSDVDARVIERARRNARRAGIGELIDFDVKDVAQLNNPLPKGPYGTVISNPPYGERLESEPALIALHSLLGRIMKSQFGGWNLSVFSASPELLSCLQLRADKQFKAKNGPLDCVQKNYHLAESEGGKPAMLAEDFANRLRKNLKKFEKWARQEGIECYRLYDADLPEYNVAIDRYADWVVVQEYAPPKTVDAHKARQRLFDIIAATIAVLDMAPNKLVLKTRERQKGKNQYQKMAEKGDFIEVQEYNARLWVNLTDYLDTGLFLDHRIARRMLGQMSKGKDFLNLFSYTGSASVHAGLGGARSTTTVDMSRTYLEWAERNLRLNGLTGRAHRLMQADVLGWLRESTEQFDLIFIDPPTFSNSKRMEDAFDVQRDHIRLMTDLKRLLRKGGTIMFSNNKRGFRMDHDGLAALGLKAQEISQKTLSQDFARNRQIHNCWLITAA.

In terms of domain architecture, THUMP spans 43 to 154 (LLYQSLMWSR…KETAHISLDL (112 aa)).

This sequence belongs to the methyltransferase superfamily. RlmKL family.

The protein resides in the cytoplasm. The enzyme catalyses guanosine(2445) in 23S rRNA + S-adenosyl-L-methionine = N(2)-methylguanosine(2445) in 23S rRNA + S-adenosyl-L-homocysteine + H(+). It catalyses the reaction guanosine(2069) in 23S rRNA + S-adenosyl-L-methionine = N(2)-methylguanosine(2069) in 23S rRNA + S-adenosyl-L-homocysteine + H(+). Functionally, specifically methylates the guanine in position 2445 (m2G2445) and the guanine in position 2069 (m7G2069) of 23S rRNA. The chain is Ribosomal RNA large subunit methyltransferase K/L from Klebsiella pneumoniae subsp. pneumoniae (strain ATCC 700721 / MGH 78578).